The sequence spans 720 residues: Serine/threonine-protein kinase KIN82 (720 aa).

Composition is skewed to polar residues over residues Met-1–Leu-13 and Phe-99–Glu-116. Disordered stretches follow at residues Met-1–Ser-20 and Phe-99–Ile-128. Ser-203 is subject to Phosphoserine. Over residues Ser-230–Pro-241 the composition is skewed to low complexity. Positions Ser-230–Pro-257 are disordered. Positions Ser-244–Gln-255 are enriched in basic and acidic residues. A Protein kinase domain is found at Phe-324–Phe-602. Residues Leu-330 to Val-338 and Lys-353 contribute to the ATP site. Asp-449 (proton acceptor) is an active-site residue.

The protein belongs to the protein kinase superfamily. Ser/Thr protein kinase family. KIN82 subfamily.

It catalyses the reaction L-seryl-[protein] + ATP = O-phospho-L-seryl-[protein] + ADP + H(+). The enzyme catalyses L-threonyl-[protein] + ATP = O-phospho-L-threonyl-[protein] + ADP + H(+). Functionally, flippase activator that phosphorylates DFN1 and DFN2 and which is involved in the generation of phospholipid asymmetry in membranes by the inward translocation of phospholipids. This chain is Serine/threonine-protein kinase KIN82 (KIN82), found in Saccharomyces cerevisiae (strain ATCC 204508 / S288c) (Baker's yeast).